We begin with the raw amino-acid sequence, 63 residues long: Conotoxin TeAr193 (63 aa).

An N-terminal signal peptide occupies residues 1-22 (MRCLPVFVILLLLIASAPSVDA). A propeptide spanning residues 23–48 (QPKTKDDIPQASFLDNAKRYLQVLES) is cleaved from the precursor.

This sequence belongs to the conotoxin T superfamily. Post-translationally, contains 2 disulfide bonds that can be either 'C1-C3, C2-C4' or 'C1-C4, C2-C3', since these disulfide connectivities have been observed for conotoxins with cysteine framework V (for examples, see AC P0DQQ7 and AC P81755). Expressed by the venom duct.

It localises to the secreted. This is Conotoxin TeAr193 from Conus textile (Cloth-of-gold cone).